We begin with the raw amino-acid sequence, 383 residues long: E3 ubiquitin-protein ligase Os04g0590900 (383 aa).

Residues 53–73 (PVFSPLVIAIIGVLASAFLLV) form a helical membrane-spanning segment. The segment at 105–129 (GGAGSGGRHGHGQSRSHESWNVSPP) is disordered. An RING-type; atypical zinc finger spans residues 157 to 199 (CSVCLGEFSDGESLRLLPRCSHAFHQQCIDTWLKSHSNCPLCR). Disordered regions lie at residues 269-291 (EANG…SSFD) and 320-383 (LLAG…DHPM).

The protein localises to the membrane. It catalyses the reaction S-ubiquitinyl-[E2 ubiquitin-conjugating enzyme]-L-cysteine + [acceptor protein]-L-lysine = [E2 ubiquitin-conjugating enzyme]-L-cysteine + N(6)-ubiquitinyl-[acceptor protein]-L-lysine.. Its pathway is protein modification; protein ubiquitination. Functionally, possesses E3 ubiquitin-protein ligase in vitro. This is E3 ubiquitin-protein ligase Os04g0590900 from Oryza sativa subsp. japonica (Rice).